Reading from the N-terminus, the 580-residue chain is Purine permease (580 aa).

The next 12 helical transmembrane spans lie at 68–88, 107–127, 136–156, 184–204, 211–231, 263–283, 294–314, 385–405, 426–446, 447–467, 481–501, and 522–542; these read PLVLALLLGLQHALAMLAGVI, SQYLVSTSLIVSGLLSAVQMF, YYVGTGLVSVVGTSFATITVA, YGALLATSCLCSLLEIGLSFM, ALFPPIVTGPTVFLIGASLIG, LPWGSAEFIGLGFLVFATIIL, SCAVIVGLLVGCIVAAACGYF, LGNGITCLLAGLCTITPMSVF, CCFFLVVMGIFAKFAAALVAI, PSSVLGGMTTFLFSSVAISGV, FILTASFAVGMAATLVPDWFS, and LVMANGFAVTGFLGLLLNLIL.

It belongs to the nucleobase:cation symporter-2 (NCS2) (TC 2.A.40) family.

The protein resides in the membrane. Able to transport with low efficiency all natural purines as well as purine analogs. This Emericella nidulans (strain FGSC A4 / ATCC 38163 / CBS 112.46 / NRRL 194 / M139) (Aspergillus nidulans) protein is Purine permease (uapC).